The following is a 209-amino-acid chain: A-type ATP synthase subunit D (209 aa).

It belongs to the V-ATPase D subunit family. As to quaternary structure, has multiple subunits with at least A(3), B(3), C, D, E, F, H, I and proteolipid K(x).

It is found in the cell membrane. Component of the A-type ATP synthase that produces ATP from ADP in the presence of a proton gradient across the membrane. The sequence is that of A-type ATP synthase subunit D from Thermoplasma volcanium (strain ATCC 51530 / DSM 4299 / JCM 9571 / NBRC 15438 / GSS1).